The following is a 1004-amino-acid chain: Glutamate [NMDA] receptor subunit 1 (1004 aa).

The signal sequence occupies residues 1–39 (MAGTDSPAAARFVYRCLLFAPAIVVGLLLPLTLPPIAAA). Residues 40–585 (QRHTASDNPS…TLVSFLQPFS (546 aa)) lie on the Extracellular side of the membrane. N-linked (GlcNAc...) asparagine glycans are attached at residues Asn-270, Asn-326, Asn-357, Asn-409, Asn-466, Asn-493, and Asn-513. Residues 542–544 (PLT) and Arg-549 each bind glycine. The helical transmembrane segment at 586-606 (NTLWILVMVSVHVVALVLYLL) threads the bilayer. Topologically, residues 607 to 663 (DRFSPFGRFKLSHSDSNEEKALNLSSAVWFAWGVLLNSGIGEGTPRSFSARVLGMVW) are cytoplasmic. Residues 664–684 (AGFAMIIVASYTANLAAFLVL) form a helical membrane-spanning segment. Residues 685–843 (ERPKTKLSGI…KTPNTLGLKN (159 aa)) are Extracellular-facing. An N-linked (GlcNAc...) asparagine glycan is attached at Asn-705. Residues Ser-715 and Asp-759 each contribute to the glycine site. A helical transmembrane segment spans residues 844 to 864 (MAGVFILVGVGIAGGVGLIII). Residues 865–1004 (EVIYKKHQVK…YTSDVSHLVV (140 aa)) lie on the Cytoplasmic side of the membrane. A disordered region spans residues 980–1004 (TRPQQNILPPRYSPGYTSDVSHLVV). Residues 994-1004 (GYTSDVSHLVV) are compositionally biased toward polar residues.

The protein belongs to the glutamate-gated ion channel (TC 1.A.10.1) family. In terms of assembly, forms a heteromeric NMDA channel with Nmdar2.

It is found in the cell membrane. The protein resides in the postsynaptic cell membrane. Its subcellular location is the postsynaptic density. In terms of biological role, NMDA receptor subtype of glutamate-gated ion channels with high calcium permeability and voltage-dependent sensitivity to magnesium. Mediated by glycine. This protein plays a key role in synaptic plasticity, synaptogenesis, excitotoxicity, memory acquisition and learning. It mediates neuronal functions in glutamate neurotransmission. Is involved in the cell surface targeting of NMDA receptors. Plays a role in associative learning and in long-term memory consolidation. This chain is Glutamate [NMDA] receptor subunit 1, found in Drosophila persimilis (Fruit fly).